An 817-amino-acid chain; its full sequence is Actin filament-associated protein 1-like 2 (817 aa).

Position 56 is a phosphotyrosine (Y56). The segment at H63–P164 is disordered. Acidic residues predominate over residues Y123–E139. PH domains follow at residues D175–G271 and S353–G447. S408 carries the post-translational modification Phosphoserine. Y413 carries the phosphotyrosine modification. S484 is subject to Phosphoserine. The span at T512–P528 shows a compositional bias: low complexity. Disordered regions lie at residues T512–K657 and G754–A786. A coiled-coil region spans residues E652–A748. Polar residues predominate over residues G754–E763. Over residues P767–P782 the composition is skewed to low complexity.

In terms of assembly, interacts with SRC. Interacts with LCK when tyrosine phosphorylated. Tyrosine phosphorylated (by SRC).

The protein resides in the cytoplasm. In terms of biological role, may play a role in a signaling cascade by enhancing the kinase activity of SRC. Contributes to SRC-regulated transcription activation. In Bos taurus (Bovine), this protein is Actin filament-associated protein 1-like 2 (AFAP1L2).